Here is an 85-residue protein sequence, read N- to C-terminus: Neutrophil elastase 2A (85 aa).

The 85-residue stretch at 1–85 (IVGGRAAEPH…VAQGVFSFVR (85 aa)) folds into the Peptidase S1 domain. Ser-67 (charge relay system) is an active-site residue.

It belongs to the peptidase S1 family. Elastase subfamily.

May be involved in the degradation of connective tissue in chronic lung disease. This Equus caballus (Horse) protein is Neutrophil elastase 2A.